We begin with the raw amino-acid sequence, 500 residues long: Cytochrome P450 CYP736A12 (500 aa).

The chain crosses the membrane as a helical span at residues 4-24 (LAYPLLFVLLGALSWWILPII). Cysteine 442 provides a ligand contact to heme.

It belongs to the cytochrome P450 family. The cofactor is heme.

The protein resides in the membrane. Functionally, probable heme-thiolate monooxygenase. This chain is Cytochrome P450 CYP736A12, found in Panax ginseng (Korean ginseng).